A 359-amino-acid polypeptide reads, in one-letter code: Glycerol-3-phosphate dehydrogenase [NAD(P)+] (359 aa).

Thr-11, Trp-12, Arg-32, and Lys-107 together coordinate NADPH. Positions 107 and 138 each coordinate sn-glycerol 3-phosphate. Ala-142 serves as a coordination point for NADPH. Residues Lys-193, Asp-246, Ser-256, Arg-257, and Asn-258 each contribute to the sn-glycerol 3-phosphate site. Catalysis depends on Lys-193, which acts as the Proton acceptor. Arg-257 provides a ligand contact to NADPH. NADPH-binding residues include Val-281 and Glu-283.

It belongs to the NAD-dependent glycerol-3-phosphate dehydrogenase family.

The protein resides in the cytoplasm. The enzyme catalyses sn-glycerol 3-phosphate + NAD(+) = dihydroxyacetone phosphate + NADH + H(+). The catalysed reaction is sn-glycerol 3-phosphate + NADP(+) = dihydroxyacetone phosphate + NADPH + H(+). The protein operates within membrane lipid metabolism; glycerophospholipid metabolism. In terms of biological role, catalyzes the reduction of the glycolytic intermediate dihydroxyacetone phosphate (DHAP) to sn-glycerol 3-phosphate (G3P), the key precursor for phospholipid synthesis. The sequence is that of Glycerol-3-phosphate dehydrogenase [NAD(P)+] from Dehalococcoides mccartyi (strain CBDB1).